A 206-amino-acid chain; its full sequence is LexA repressor (206 aa).

The H-T-H motif DNA-binding region spans 28-48 (RAEIARELGFRSANAAEEHLK). Catalysis depends on for autocatalytic cleavage activity residues Ser-123 and Lys-160.

Belongs to the peptidase S24 family. Homodimer.

It carries out the reaction Hydrolysis of Ala-|-Gly bond in repressor LexA.. Functionally, represses a number of genes involved in the response to DNA damage (SOS response), including recA and lexA. In the presence of single-stranded DNA, RecA interacts with LexA causing an autocatalytic cleavage which disrupts the DNA-binding part of LexA, leading to derepression of the SOS regulon and eventually DNA repair. This is LexA repressor from Vibrio campbellii (strain ATCC BAA-1116).